The following is a 219-amino-acid chain: Peptidyl-tRNA hydrolase (219 aa).

Position 26 (Tyr26) interacts with tRNA. His31 acts as the Proton acceptor in catalysis. TRNA-binding residues include Tyr78, Asn80, and Asn126.

The protein belongs to the PTH family. Monomer.

The protein resides in the cytoplasm. It carries out the reaction an N-acyl-L-alpha-aminoacyl-tRNA + H2O = an N-acyl-L-amino acid + a tRNA + H(+). In terms of biological role, hydrolyzes ribosome-free peptidyl-tRNAs (with 1 or more amino acids incorporated), which drop off the ribosome during protein synthesis, or as a result of ribosome stalling. Its function is as follows. Catalyzes the release of premature peptidyl moieties from peptidyl-tRNA molecules trapped in stalled 50S ribosomal subunits, and thus maintains levels of free tRNAs and 50S ribosomes. This Trichodesmium erythraeum (strain IMS101) protein is Peptidyl-tRNA hydrolase.